A 180-amino-acid polypeptide reads, in one-letter code: MMKLIVLAAFIGVCAGGALPGYVAPQYRFAPDYYPEGRYRPNVEGNAAVLRSDSEVSEQGFRYAYETENGIRGEATGVESDGIQSQGSFAYTGADGQQYSVTYTADGNGFQPQGAHFPTPPPVPEAIVRSLQENARDEAAGIFDDGSYHEAKYDPASIAAKAQHQYHYQPNTRYFPRYHY.

A signal peptide spans 1–16 (MMKLIVLAAFIGVCAG). Positions 58–121 (EQGFRYAYET…PQGAHFPTPP (64 aa)) constitute a Chitin-binding type R&amp;R domain.

The sequence is that of Cuticle protein 3 from Lonomia obliqua (Moth).